The sequence spans 344 residues: Small ribosomal subunit protein uS3 (344 aa).

The region spanning leucine 38 to histidine 106 is the KH type-2 domain. Positions proline 217–glutamine 344 are disordered. Composition is skewed to basic and acidic residues over residues proline 219 to arginine 259 and glutamine 335 to glutamine 344.

This sequence belongs to the universal ribosomal protein uS3 family. Part of the 30S ribosomal subunit. Forms a tight complex with proteins S10 and S14.

Binds the lower part of the 30S subunit head. Binds mRNA in the 70S ribosome, positioning it for translation. This chain is Small ribosomal subunit protein uS3, found in Solibacter usitatus (strain Ellin6076).